The chain runs to 62 residues: Large ribosomal subunit protein bL32m (62 aa).

Belongs to the bacterial ribosomal protein bL32 family.

Its subcellular location is the mitochondrion. The chain is Large ribosomal subunit protein bL32m (RPL32) from Reclinomonas americana.